Here is a 37-residue protein sequence, read N- to C-terminus: Large ribosomal subunit protein bL36 (37 aa).

The protein belongs to the bacterial ribosomal protein bL36 family.

This is Large ribosomal subunit protein bL36 from Geobacter sp. (strain M21).